A 970-amino-acid chain; its full sequence is Insulin-degrading enzyme-like 1, peroxisomal (970 aa).

Histidine 69 contributes to the Zn(2+) binding site. The active-site Proton acceptor is glutamate 72. Histidine 73 serves as a coordination point for Zn(2+). The active site involves glutamate 143. Glutamate 150 contacts Zn(2+).

This sequence belongs to the peptidase M16 family. Zn(2+) is required as a cofactor.

The protein localises to the peroxisome. Its function is as follows. Peptidase that might be involved in pathogen or wound response. Not required for peroxisome biogenesis, indole-3-butyric acid (IBA) metabolism, fatty acid beta-oxidation or degradation of glyoxylate cycle enzymes during seedling development. The sequence is that of Insulin-degrading enzyme-like 1, peroxisomal (PXM16) from Arabidopsis thaliana (Mouse-ear cress).